The primary structure comprises 1188 residues: Integrin alpha-11 (1188 aa).

An N-terminal signal peptide occupies residues 1–22 (MDFPRGLLVAWTLSLWPGFTDT). Residues 23–1141 (FNMDTRNPRV…ISKQEDWQVP (1119 aa)) are Extracellular-facing. FG-GAP repeat units lie at residues 24–85 (NMDT…NCTK) and 91–151 (VTLS…FSKT). C76 and C83 are oxidised to a cystine. N82 and N95 each carry an N-linked (GlcNAc...) asparagine glycan. 2 disulfides stabilise this stretch: C121–C139 and C129–C159. Positions 164–345 (DIVIVLDGSN…AALKDIVDAL (182 aa)) constitute a VWFA domain. N291, N331, N358, N449, and N462 each carry an N-linked (GlcNAc...) asparagine glycan. FG-GAP repeat units lie at residues 355–406 (TNKN…VIPH), 411–461 (LKEF…SMHN), 462–527 (NRSL…RFVY), 528–586 (NGTL…NILK), and 590–650 (QRIT…FEPS). Positions 488, 490, 492, and 496 each coordinate Ca(2+). A glycan (N-linked (GlcNAc...) asparagine) is linked at N528. Ca(2+) is bound by residues D551, N553, D555, D559, D613, N615, D617, and D621. N642 carries an N-linked (GlcNAc...) asparagine glycan. Intrachain disulfides connect C659-C668, C674-C729, and C781-C787. N694 carries an N-linked (GlcNAc...) asparagine glycan. Residue N857 is glycosylated (N-linked (GlcNAc...) asparagine). C881 and C893 are oxidised to a cystine. N-linked (GlcNAc...) asparagine glycans are attached at residues N894, N973, N1031, N1039, and N1059. The helical transmembrane segment at 1142–1164 (IWIIVGSTLGGLLLLALLVLALW) threads the bilayer. The Cytoplasmic segment spans residues 1165-1188 (KLGFFKSAKRKREPGLGPIPKELK).

The protein belongs to the integrin alpha chain family. Heterodimer of an alpha and a beta subunit. Alpha-11 associates with beta-1. Interacts with RAB21.

It is found in the membrane. Functionally, integrin alpha-11/beta-1 is a receptor for collagen. The polypeptide is Integrin alpha-11 (Itga11) (Mus musculus (Mouse)).